The primary structure comprises 440 residues: Ultraviolet-B receptor UVR8 (440 aa).

N-acetylalanine is present on Ala-2. RCC1 repeat units lie at residues 2–31, 32–84, 86–137, 139–189, 190–241, 243–293, 294–345, and 347–399; these read AEDMAADEVTAPPRKVLIISAGASHSVALL, SGDI…AYSQ, GMEV…AVTM, GEVQ…AVTE, DGDL…SVSY, GALY…ALTS, DGKL…AVTE, and NNVF…SGKS. Residues 397–423 are required for interaction with COP1; that stretch reads GKSWVSPAERYAVVPDETGLTDGSSKG. Residues 413–440 form a disordered region; it reads ETGLTDGSSKGNGGDISVPQTDVKRVRI.

In terms of assembly, homodimer in the absence of UV-B, but absorption of UV-B induces monomerization of UVR8 and interaction with COP1. Interacts with RUP1, RUP2 and histone H2B.

The protein localises to the nucleus. The protein resides in the cytoplasm. Its subcellular location is the cytosol. Functionally, UV-B specific signaling component that acts as a UV-B photoreceptor and plays a key role in establishing UV-protective responses in plants. Upon UV-B irradiation, UVR8 undergoes an immediate switch from homodimer to monomer, accumulates in the nucleus, interacts with the photomorphogenic repressor COP1 and regulates the expression of the transcription factor HY5 by associating with chromatin (through histone H2B binding) in the HY5 promoter region. UVR8 is involved in controlling aspects of leaf growth and morphogenesis in response to UV-B, is required for normal progression of endocycle and has a regulatory role in stomatal differentiation. Is required for plant circadian clock response to photomorphogenic UV-B light, partly through the transcriptional activation of responsive clock genes. Promotes photosynthetic efficiency at elevated levels of UV-B. Plays a role in mediating the effects of UV-B radiation on pathogen resistance by controlling the expression of the sinapate biosynthetic pathway. The two tryptophans, Trp-285 and Trp-233, serve collectively as the UV-B chromophore. The sequence is that of Ultraviolet-B receptor UVR8 from Arabidopsis thaliana (Mouse-ear cress).